The following is a 298-amino-acid chain: GTP cyclohydrolase FolE2 (298 aa).

Belongs to the GTP cyclohydrolase IV family.

It carries out the reaction GTP + H2O = 7,8-dihydroneopterin 3'-triphosphate + formate + H(+). Its pathway is cofactor biosynthesis; 7,8-dihydroneopterin triphosphate biosynthesis; 7,8-dihydroneopterin triphosphate from GTP: step 1/1. Its function is as follows. Converts GTP to 7,8-dihydroneopterin triphosphate. The chain is GTP cyclohydrolase FolE2 from Azotobacter vinelandii (strain DJ / ATCC BAA-1303).